Reading from the N-terminus, the 127-residue chain is Glycine cleavage system H protein (127 aa).

Positions 22-104 (QVVIGITHFA…YEGAWMVKVE (83 aa)) constitute a Lipoyl-binding domain. Lys63 is subject to N6-lipoyllysine.

Belongs to the GcvH family. In terms of assembly, the glycine cleavage system is composed of four proteins: P, T, L and H. (R)-lipoate is required as a cofactor.

The glycine cleavage system catalyzes the degradation of glycine. The H protein shuttles the methylamine group of glycine from the P protein to the T protein. In terms of biological role, is also involved in protein lipoylation via its role as an octanoyl/lipoyl carrier protein intermediate. The polypeptide is Glycine cleavage system H protein (Bacillus cytotoxicus (strain DSM 22905 / CIP 110041 / 391-98 / NVH 391-98)).